Here is a 156-residue protein sequence, read N- to C-terminus: MEDLEEENFSLSVSSPKDAEFDNVVGHLEDIIMDDEFQLLQHGFMDKHYHEFEDTEENKLTYTTIFNEYIGLVEKYIEEQLLQRIPAFDMSAFTSSLQCHREEIAGDIFDILLTFTDFLAFKEMFLDYKAEKEGRTVDLGCGLVVTSLMSSSISSS.

Belongs to the ARL2BP family.

It localises to the cytoplasm. The protein localises to the mitochondrion intermembrane space. The protein resides in the cytoskeleton. Its subcellular location is the microtubule organizing center. It is found in the centrosome. It localises to the nucleus. The protein localises to the spindle. The protein resides in the cilium basal body. In terms of biological role, plays a role as an effector of the ADP-ribosylation factor-like protein 2, ARL2. The protein is ADP-ribosylation factor-like protein 2-binding protein (arl2bp) of Xenopus laevis (African clawed frog).